The sequence spans 204 residues: 3-isopropylmalate dehydratase small subunit (204 aa).

It belongs to the LeuD family. LeuD type 1 subfamily. Heterodimer of LeuC and LeuD.

The enzyme catalyses (2R,3S)-3-isopropylmalate = (2S)-2-isopropylmalate. It functions in the pathway amino-acid biosynthesis; L-leucine biosynthesis; L-leucine from 3-methyl-2-oxobutanoate: step 2/4. Functionally, catalyzes the isomerization between 2-isopropylmalate and 3-isopropylmalate, via the formation of 2-isopropylmaleate. The protein is 3-isopropylmalate dehydratase small subunit of Vesicomyosocius okutanii subsp. Calyptogena okutanii (strain HA).